The sequence spans 223 residues: Ribose-5-phosphate isomerase A (223 aa).

Residues 29-32 (TGST), 82-85 (DGAD), and 95-98 (KGGG) each bind substrate. The active-site Proton acceptor is the glutamate 104. Lysine 122 lines the substrate pocket.

Belongs to the ribose 5-phosphate isomerase family. In terms of assembly, homodimer.

It carries out the reaction aldehydo-D-ribose 5-phosphate = D-ribulose 5-phosphate. It participates in carbohydrate degradation; pentose phosphate pathway; D-ribose 5-phosphate from D-ribulose 5-phosphate (non-oxidative stage): step 1/1. Functionally, catalyzes the reversible conversion of ribose-5-phosphate to ribulose 5-phosphate. This chain is Ribose-5-phosphate isomerase A, found in Neisseria meningitidis serogroup C / serotype 2a (strain ATCC 700532 / DSM 15464 / FAM18).